A 296-amino-acid chain; its full sequence is Formamidopyrimidine-DNA glycosylase (296 aa).

Pro-2 acts as the Schiff-base intermediate with DNA in catalysis. The active-site Proton donor is Glu-3. Lys-58 (proton donor; for beta-elimination activity) is an active-site residue. Residues His-104, Arg-126, and Lys-169 each coordinate DNA. The FPG-type zinc finger occupies Ser-260 to Lys-296. Arg-286 functions as the Proton donor; for delta-elimination activity in the catalytic mechanism.

It belongs to the FPG family. In terms of assembly, monomer. It depends on Zn(2+) as a cofactor.

The catalysed reaction is Hydrolysis of DNA containing ring-opened 7-methylguanine residues, releasing 2,6-diamino-4-hydroxy-5-(N-methyl)formamidopyrimidine.. It carries out the reaction 2'-deoxyribonucleotide-(2'-deoxyribose 5'-phosphate)-2'-deoxyribonucleotide-DNA = a 3'-end 2'-deoxyribonucleotide-(2,3-dehydro-2,3-deoxyribose 5'-phosphate)-DNA + a 5'-end 5'-phospho-2'-deoxyribonucleoside-DNA + H(+). In terms of biological role, involved in base excision repair of DNA damaged by oxidation or by mutagenic agents. Acts as a DNA glycosylase that recognizes and removes damaged bases. Has a preference for oxidized purines, such as 7,8-dihydro-8-oxoguanine (8-oxoG). Has AP (apurinic/apyrimidinic) lyase activity and introduces nicks in the DNA strand. Cleaves the DNA backbone by beta-delta elimination to generate a single-strand break at the site of the removed base with both 3'- and 5'-phosphates. This Rhizobium etli (strain CIAT 652) protein is Formamidopyrimidine-DNA glycosylase.